Here is a 387-residue protein sequence, read N- to C-terminus: 3-ketoacyl-CoA thiolase (387 aa).

Cys-91 (acyl-thioester intermediate) is an active-site residue. Catalysis depends on proton acceptor residues His-343 and Cys-373.

The protein belongs to the thiolase-like superfamily. Thiolase family. Heterotetramer of two alpha chains (FadB) and two beta chains (FadA).

The protein resides in the cytoplasm. It catalyses the reaction an acyl-CoA + acetyl-CoA = a 3-oxoacyl-CoA + CoA. It participates in lipid metabolism; fatty acid beta-oxidation. Its function is as follows. Catalyzes the final step of fatty acid oxidation in which acetyl-CoA is released and the CoA ester of a fatty acid two carbons shorter is formed. This chain is 3-ketoacyl-CoA thiolase, found in Vibrio cholerae serotype O1 (strain ATCC 39315 / El Tor Inaba N16961).